Here is a 44-residue protein sequence, read N- to C-terminus: Photosystem I reaction center subunit IX (44 aa).

The chain crosses the membrane as a helical span at residues Tyr-7–Ile-27.

Belongs to the PsaJ family.

It is found in the plastid. The protein localises to the chloroplast thylakoid membrane. Functionally, may help in the organization of the PsaE and PsaF subunits. This is Photosystem I reaction center subunit IX from Liriodendron tulipifera (Tuliptree).